Here is a 382-residue protein sequence, read N- to C-terminus: Gas vesicle protein C1 (382 aa).

Residues 1–18 (MSVTDKRDEMSTARDKFA) show a composition bias toward basic and acidic residues. The tract at residues 1-21 (MSVTDKRDEMSTARDKFAESQ) is disordered. A run of 7 repeats spans residues 22 to 60 (QEFE…TNTT), 61 to 92 (DAFH…REMQ), 93 to 130 (DAFE…NSTH), 131 to 168 (GAFE…IAVQ), 169 to 200 (DAFD…DATA), 201 to 240 (DAFA…ETTE), and 241 to 284 (DAFV…VSPD). The segment at 22-284 (QEFESYADEF…VEAEAEVSPD (263 aa)) is 7 X approximate tandem repeats. Over residues 260 to 302 (GAAEAEAEPVEADADVEAEAEVSPDEAGGESAGTEEEETEPAE) the composition is skewed to acidic residues. The tract at residues 260–382 (GAAEAEAEPV…DVPLRPDDKT (123 aa)) is disordered. Residues 303–316 (VETAAPEVEGSPAD) are compositionally biased toward low complexity. Residues 317–336 (TADEAEDTEAEEETEEEAPE) are compositionally biased toward acidic residues. A compositionally biased stretch (basic and acidic residues) spans 365 to 382 (EYRDEYGEDVPLRPDDKT).

It belongs to the halobacterial gas vesicle GvpC family. Forms homodimers, interacts with GvpF1, GvpH1, GvpI1, GvpL1, GvpN1 and GvpO1 via its C-terminus (residues 329-382).

The protein resides in the gas vesicle. The protein localises to the cytoplasm. In terms of biological role, confers stability, involved in shaping gas vesicles. Gas vesicles are hollow, gas filled proteinaceous nanostructures found in several microbial planktonic microorganisms. They allow positioning of halobacteria at the optimal depth for growth in the poorly aerated, shallow brine pools of their habitat. Expression of a 9.5 kb p-vac DNA fragment containing 2 divergently transcribed regions (gvpD-gvpE-gvpF-gvpG-gvpH-gvpI-gvpJ-gvpK-gvpL-gvpM and gvpA-gvpC-gvpN-gvpO) allows H.volcanii to produce gas vesicles. A similar region restores gas vesicle production in H.halobium without the p-vac locus, but it still has the c-vac locus. This chain is Gas vesicle protein C1 (gvpC1), found in Halobacterium salinarum (strain ATCC 700922 / JCM 11081 / NRC-1) (Halobacterium halobium).